The chain runs to 360 residues: Ribosomal RNA large subunit methyltransferase M (360 aa).

Residues Ser-190, 223–226 (CPGG), Asp-242, Asp-262, and Asp-280 contribute to the S-adenosyl-L-methionine site. The Proton acceptor role is filled by Lys-309.

The protein belongs to the class I-like SAM-binding methyltransferase superfamily. RNA methyltransferase RlmE family. RlmM subfamily. In terms of assembly, monomer.

The protein localises to the cytoplasm. It catalyses the reaction cytidine(2498) in 23S rRNA + S-adenosyl-L-methionine = 2'-O-methylcytidine(2498) in 23S rRNA + S-adenosyl-L-homocysteine + H(+). Its function is as follows. Catalyzes the 2'-O-methylation at nucleotide C2498 in 23S rRNA. The chain is Ribosomal RNA large subunit methyltransferase M from Haemophilus ducreyi (strain 35000HP / ATCC 700724).